The primary structure comprises 64 residues: Small ribosomal subunit protein bS21 (64 aa).

Belongs to the bacterial ribosomal protein bS21 family.

In Flavobacterium johnsoniae (strain ATCC 17061 / DSM 2064 / JCM 8514 / BCRC 14874 / CCUG 350202 / NBRC 14942 / NCIMB 11054 / UW101) (Cytophaga johnsonae), this protein is Small ribosomal subunit protein bS21.